We begin with the raw amino-acid sequence, 238 residues long: Ribonuclease PH (238 aa).

Phosphate contacts are provided by residues R86 and 124 to 126 (GTR).

Belongs to the RNase PH family. As to quaternary structure, homohexameric ring arranged as a trimer of dimers.

It catalyses the reaction tRNA(n+1) + phosphate = tRNA(n) + a ribonucleoside 5'-diphosphate. In terms of biological role, phosphorolytic 3'-5' exoribonuclease that plays an important role in tRNA 3'-end maturation. Removes nucleotide residues following the 3'-CCA terminus of tRNAs; can also add nucleotides to the ends of RNA molecules by using nucleoside diphosphates as substrates, but this may not be physiologically important. Probably plays a role in initiation of 16S rRNA degradation (leading to ribosome degradation) during starvation. This chain is Ribonuclease PH, found in Geotalea uraniireducens (strain Rf4) (Geobacter uraniireducens).